Consider the following 110-residue polypeptide: Bowman-Birk type proteinase inhibitor (110 aa).

An N-terminal signal peptide occupies residues 1–28 (MVLMNKKAIMKLALMLFLLGFTANVVDA). Residues 29-42 (RFDSTSFITQVLSN) constitute a propeptide that is removed on maturation. Disulfide bonds link C50-C103, C51-C66, C54-C99, C56-C64, C73-C80, C77-C92, and C82-C90.

In terms of assembly, monomer.

In terms of biological role, inhibitor of trypsin and of chymotrypsin. This chain is Bowman-Birk type proteinase inhibitor, found in Lens culinaris (Lentil).